Reading from the N-terminus, the 191-residue chain is Elongation factor P (191 aa).

This sequence belongs to the elongation factor P family.

The protein localises to the cytoplasm. It functions in the pathway protein biosynthesis; polypeptide chain elongation. Its function is as follows. Involved in peptide bond synthesis. Stimulates efficient translation and peptide-bond synthesis on native or reconstituted 70S ribosomes in vitro. Probably functions indirectly by altering the affinity of the ribosome for aminoacyl-tRNA, thus increasing their reactivity as acceptors for peptidyl transferase. In Bartonella tribocorum (strain CIP 105476 / IBS 506), this protein is Elongation factor P.